Consider the following 406-residue polypeptide: tRNA-specific 2-thiouridylase MnmA (406 aa).

Residues 42-49 and L68 each bind ATP; that span reads GLSGGVDS. Residue C129 is the Nucleophile of the active site. Residues C129 and C237 are joined by a disulfide bond. Position 154 (G154) interacts with ATP. The interaction with tRNA stretch occupies residues 187–189; it reads KDQ. C237 serves as the catalytic Cysteine persulfide intermediate. Positions 342–343 are interaction with tRNA; the sequence is RY.

Belongs to the MnmA/TRMU family.

It localises to the cytoplasm. It carries out the reaction S-sulfanyl-L-cysteinyl-[protein] + uridine(34) in tRNA + AH2 + ATP = 2-thiouridine(34) in tRNA + L-cysteinyl-[protein] + A + AMP + diphosphate + H(+). Catalyzes the 2-thiolation of uridine at the wobble position (U34) of tRNA, leading to the formation of s(2)U34. This chain is tRNA-specific 2-thiouridylase MnmA, found in Prochlorococcus marinus (strain MIT 9211).